The following is a 264-amino-acid chain: Diphthine synthase (264 aa).

S-adenosyl-L-methionine-binding positions include Leu10, Asp87, Val90, 115–116 (SI), Leu166, Ala209, and His234.

It belongs to the diphthine synthase family. As to quaternary structure, homodimer.

It carries out the reaction 2-[(3S)-amino-3-carboxypropyl]-L-histidyl-[translation elongation factor 2] + 3 S-adenosyl-L-methionine = diphthine-[translation elongation factor 2] + 3 S-adenosyl-L-homocysteine + 3 H(+). It functions in the pathway protein modification; peptidyl-diphthamide biosynthesis. In terms of biological role, S-adenosyl-L-methionine-dependent methyltransferase that catalyzes the trimethylation of the amino group of the modified target histidine residue in translation elongation factor 2 (EF-2), to form an intermediate called diphthine. The three successive methylation reactions represent the second step of diphthamide biosynthesis. This Thermococcus onnurineus (strain NA1) protein is Diphthine synthase.